The sequence spans 272 residues: Phosphonates import ATP-binding protein PhnC (272 aa).

Residues 2 to 244 form the ABC transporter domain; that stretch reads LVFDKVNRVY…IQKRLYEIEH (243 aa). 35–42 serves as a coordination point for ATP; the sequence is GPSGAGKS.

The protein belongs to the ABC transporter superfamily. Phosphonates importer (TC 3.A.1.9.1) family. The complex is composed of two ATP-binding proteins (PhnC), two transmembrane proteins (PhnE) and a solute-binding protein (PhnD).

The protein localises to the cell inner membrane. The enzyme catalyses phosphonate(out) + ATP + H2O = phosphonate(in) + ADP + phosphate + H(+). Functionally, part of the ABC transporter complex PhnCDE involved in phosphonates import. Responsible for energy coupling to the transport system. This Hydrogenovibrio crunogenus (strain DSM 25203 / XCL-2) (Thiomicrospira crunogena) protein is Phosphonates import ATP-binding protein PhnC.